A 379-amino-acid chain; its full sequence is UDP-N-acetylglucosamine--N-acetylmuramyl-(pentapeptide) pyrophosphoryl-undecaprenol N-acetylglucosamine transferase (379 aa).

UDP-N-acetyl-alpha-D-glucosamine is bound by residues 17–19 (TGG), asparagine 128, arginine 169, serine 197, and glutamine 298.

This sequence belongs to the glycosyltransferase 28 family. MurG subfamily.

The protein resides in the cell inner membrane. The catalysed reaction is di-trans,octa-cis-undecaprenyl diphospho-N-acetyl-alpha-D-muramoyl-L-alanyl-D-glutamyl-meso-2,6-diaminopimeloyl-D-alanyl-D-alanine + UDP-N-acetyl-alpha-D-glucosamine = di-trans,octa-cis-undecaprenyl diphospho-[N-acetyl-alpha-D-glucosaminyl-(1-&gt;4)]-N-acetyl-alpha-D-muramoyl-L-alanyl-D-glutamyl-meso-2,6-diaminopimeloyl-D-alanyl-D-alanine + UDP + H(+). Its pathway is cell wall biogenesis; peptidoglycan biosynthesis. Cell wall formation. Catalyzes the transfer of a GlcNAc subunit on undecaprenyl-pyrophosphoryl-MurNAc-pentapeptide (lipid intermediate I) to form undecaprenyl-pyrophosphoryl-MurNAc-(pentapeptide)GlcNAc (lipid intermediate II). This chain is UDP-N-acetylglucosamine--N-acetylmuramyl-(pentapeptide) pyrophosphoryl-undecaprenol N-acetylglucosamine transferase, found in Brucella suis (strain ATCC 23445 / NCTC 10510).